The sequence spans 267 residues: MNALLTNPFKERLCKGEVQIGLWLSSTTAYMAEIAATSGYDWLLIDGEHAPNTIQDLYHQLQAVAPYASQPVIRPVEGSKPLIKQVLDIGAQTLLLPMVDTADQARQVVSATRYPPYGERGVGASVARAARWGRIENYMAQVNDSLCLLVQVESKTALDNLDKILDVQGIDGVFIGPADLSASLGYPDNAGHLEVQRIIETSIRRIRDAGKAAGFLAVAPDMAQQCLAWGANFVAVGVDTMLYSDALDQRLAMFKSGKNGPRIKGSY.

Catalysis depends on H49, which acts as the Proton acceptor. Q151 provides a ligand contact to substrate. E153 lines the Mg(2+) pocket. Substrate contacts are provided by A178 and D179. D179 contacts Mg(2+).

The protein belongs to the HpcH/HpaI aldolase family. KDR aldolase subfamily. Homohexamer. The cofactor is Mg(2+).

It carries out the reaction 2-dehydro-3-deoxy-L-rhamnonate = (S)-lactaldehyde + pyruvate. Its function is as follows. Catalyzes the reversible retro-aldol cleavage of 2-keto-3-deoxy-L-rhamnonate (KDR) to pyruvate and lactaldehyde. In Shigella dysenteriae serotype 1 (strain Sd197), this protein is 2-keto-3-deoxy-L-rhamnonate aldolase.